Here is a 105-residue protein sequence, read N- to C-terminus: Small ribosomal subunit protein uS10 (105 aa).

It belongs to the universal ribosomal protein uS10 family. Part of the 30S ribosomal subunit.

Its function is as follows. Involved in the binding of tRNA to the ribosomes. The chain is Small ribosomal subunit protein uS10 from Trichodesmium erythraeum (strain IMS101).